We begin with the raw amino-acid sequence, 138 residues long: Endoribonuclease YbeY (138 aa).

The Zn(2+) site is built by His105, His109, and Asp115.

It belongs to the endoribonuclease YbeY family. Zn(2+) is required as a cofactor.

The protein resides in the cytoplasm. Its function is as follows. Single strand-specific metallo-endoribonuclease involved in late-stage 70S ribosome quality control and in maturation of the 3' terminus of the 16S rRNA. In Chlorobium phaeobacteroides (strain BS1), this protein is Endoribonuclease YbeY.